We begin with the raw amino-acid sequence, 360 residues long: Peptide chain release factor 1 (360 aa).

Position 237 is an N5-methylglutamine (Gln237).

This sequence belongs to the prokaryotic/mitochondrial release factor family. In terms of processing, methylated by PrmC. Methylation increases the termination efficiency of RF1.

It localises to the cytoplasm. In terms of biological role, peptide chain release factor 1 directs the termination of translation in response to the peptide chain termination codons UAG and UAA. This chain is Peptide chain release factor 1, found in Nitrosococcus oceani (strain ATCC 19707 / BCRC 17464 / JCM 30415 / NCIMB 11848 / C-107).